Here is a 256-residue protein sequence, read N- to C-terminus: 5'-nucleotidase SurE (256 aa).

A divalent metal cation contacts are provided by Asp8, Asp9, Ser40, and Asn92.

It belongs to the SurE nucleotidase family. It depends on a divalent metal cation as a cofactor.

The protein localises to the cytoplasm. It catalyses the reaction a ribonucleoside 5'-phosphate + H2O = a ribonucleoside + phosphate. Its function is as follows. Nucleotidase that shows phosphatase activity on nucleoside 5'-monophosphates. This chain is 5'-nucleotidase SurE, found in Sinorhizobium medicae (strain WSM419) (Ensifer medicae).